The following is a 529-amino-acid chain: MGSSRAPWMGRVGGHGMMALLLAGLLLPGTLAKSIGTFSDPCKDPTRITSPNDPCLTGKGDSSGFSSYSGSSSSGSSISSARSSGGGSSGSSSGSSIAQGGSAGSFKPGTGYSQVSYSSGSGSSLQGASGSSQLGSSSSHSGNSGSHSGSSSSHSSSSSSFQFSSSSFQVGNGSALPTNDNSYRGILNPSQPGQSSSSSQTFGVSSSGQSVSSNQRPCSSDIPDSPCSGGPIVSHSGPYIPSSHSVSGGQRPVVVVVDQHGSGAPGVVQGPPCSNGGLPGKPCPPITSVDKSYGGYEVVGGSSDSYLVPGMTYSKGKIYPVGYFTKENPVKGSPGVPSFAAGPPISEGKYFSSNPIIPSQSAASSAIAFQPVGTGGVQLCGGGSTGSKGPCSPSSSRVPSSSSISSSSGLPYHPCGSASQSPCSPPGTGSFSSSSSSQSSGKIILQPCGSKSSSSGHPCMSVSSLTLTGGPDGSPHPDPSAGAKPCGSSSAGKIPCRSIRDILAQVKPLGPQLADPEVFLPQGELLNSP.

The N-terminal stretch at 1-32 is a signal peptide; it reads MGSSRAPWMGRVGGHGMMALLLAGLLLPGTLA. 2 disordered regions span residues 38–248 and 383–492; these read FSDP…SVSG and GSTG…SSAG. 6 stretches are compositionally biased toward low complexity: residues 58–83, 90–100, 111–175, 189–231, 392–408, and 426–441; these read GKGD…SARS, GSSSGSSIAQG, GYSQ…NGSA, PSQP…SGGP, SPSS…SSSS, and PGTG…QSSG. An N-linked (GlcNAc...) asparagine glycan is attached at Asn172. Over residues 449–467 the composition is skewed to polar residues; sequence GSKSSSSGHPCMSVSSLTL.

As to expression, exclusively expressed in skin.

The protein resides in the secreted. Functionally, important for the epidermal barrier integrity. In Homo sapiens (Human), this protein is Corneodesmosin (CDSN).